We begin with the raw amino-acid sequence, 512 residues long: Glutathione-binding protein GsiB (512 aa).

Positions 1-26 are cleaved as a signal peptide; sequence MTQFITHKWLAALGLASSIAAFPALA.

Belongs to the bacterial solute-binding protein 5 family. The complex is composed of two ATP-binding proteins (GsiA), two transmembrane proteins (GsiC and GsiD) and a solute-binding protein (GsiB).

It localises to the periplasm. Its function is as follows. Part of the ABC transporter complex GsiABCD involved in glutathione import. Binds glutathione. This is Glutathione-binding protein GsiB from Salmonella paratyphi A (strain ATCC 9150 / SARB42).